We begin with the raw amino-acid sequence, 464 residues long: A-type ATP synthase subunit B (464 aa).

It belongs to the ATPase alpha/beta chains family. As to quaternary structure, has multiple subunits with at least A(3), B(3), C, D, E, F, H, I and proteolipid K(x).

The protein resides in the cell membrane. Its function is as follows. Component of the A-type ATP synthase that produces ATP from ADP in the presence of a proton gradient across the membrane. The B chain is a regulatory subunit. This is A-type ATP synthase subunit B from Methanococcus aeolicus (strain ATCC BAA-1280 / DSM 17508 / OCM 812 / Nankai-3).